A 122-amino-acid chain; its full sequence is Large ribosomal subunit protein uL14 (122 aa).

Belongs to the universal ribosomal protein uL14 family. Part of the 50S ribosomal subunit. Forms a cluster with proteins L3 and L19. In the 70S ribosome, L14 and L19 interact and together make contacts with the 16S rRNA in bridges B5 and B8.

Functionally, binds to 23S rRNA. Forms part of two intersubunit bridges in the 70S ribosome. The chain is Large ribosomal subunit protein uL14 from Methylibium petroleiphilum (strain ATCC BAA-1232 / LMG 22953 / PM1).